A 259-amino-acid polypeptide reads, in one-letter code: Phosphatidylserine decarboxylase proenzyme (259 aa).

Residues Asp-86, His-142, and Ser-226 each act as charge relay system; for autoendoproteolytic cleavage activity in the active site. Ser-226 acts as the Schiff-base intermediate with substrate; via pyruvic acid; for decarboxylase activity in catalysis. A Pyruvic acid (Ser); by autocatalysis modification is found at Ser-226.

This sequence belongs to the phosphatidylserine decarboxylase family. PSD-B subfamily. Prokaryotic type I sub-subfamily. Heterodimer of a large membrane-associated beta subunit and a small pyruvoyl-containing alpha subunit. Requires pyruvate as cofactor. In terms of processing, is synthesized initially as an inactive proenzyme. Formation of the active enzyme involves a self-maturation process in which the active site pyruvoyl group is generated from an internal serine residue via an autocatalytic post-translational modification. Two non-identical subunits are generated from the proenzyme in this reaction, and the pyruvate is formed at the N-terminus of the alpha chain, which is derived from the carboxyl end of the proenzyme. The autoendoproteolytic cleavage occurs by a canonical serine protease mechanism, in which the side chain hydroxyl group of the serine supplies its oxygen atom to form the C-terminus of the beta chain, while the remainder of the serine residue undergoes an oxidative deamination to produce ammonia and the pyruvoyl prosthetic group on the alpha chain. During this reaction, the Ser that is part of the protease active site of the proenzyme becomes the pyruvoyl prosthetic group, which constitutes an essential element of the active site of the mature decarboxylase.

It is found in the cell membrane. It carries out the reaction a 1,2-diacyl-sn-glycero-3-phospho-L-serine + H(+) = a 1,2-diacyl-sn-glycero-3-phosphoethanolamine + CO2. It participates in phospholipid metabolism; phosphatidylethanolamine biosynthesis; phosphatidylethanolamine from CDP-diacylglycerol: step 2/2. Its function is as follows. Catalyzes the formation of phosphatidylethanolamine (PtdEtn) from phosphatidylserine (PtdSer). The chain is Phosphatidylserine decarboxylase proenzyme from Geobacillus sp. (strain WCH70).